The primary structure comprises 190 residues: Large ribosomal subunit protein uL22 (190 aa).

The segment at 111 to 190 (SVQSTKAKAK…TKKKTEGEEK (80 aa)) is disordered. A compositionally biased stretch (basic and acidic residues) spans 125-147 (IKSEDSKNSLKVTESKADSKVDA). Low complexity predominate over residues 167 to 178 (AKVATTKSTATR).

The protein belongs to the universal ribosomal protein uL22 family. Part of the 50S ribosomal subunit.

This protein binds specifically to 23S rRNA; its binding is stimulated by other ribosomal proteins, e.g. L4, L17, and L20. It is important during the early stages of 50S assembly. It makes multiple contacts with different domains of the 23S rRNA in the assembled 50S subunit and ribosome. Functionally, the globular domain of the protein is located near the polypeptide exit tunnel on the outside of the subunit, while an extended beta-hairpin is found that lines the wall of the exit tunnel in the center of the 70S ribosome. The polypeptide is Large ribosomal subunit protein uL22 (Helicobacter hepaticus (strain ATCC 51449 / 3B1)).